Reading from the N-terminus, the 95-residue chain is Aspartyl/glutamyl-tRNA(Asn/Gln) amidotransferase subunit C (95 aa).

The disordered stretch occupies residues 74–95; that stretch reads GQALEPAPDADNEHFLVPQVVE.

The protein belongs to the GatC family. Heterotrimer of A, B and C subunits.

It carries out the reaction L-glutamyl-tRNA(Gln) + L-glutamine + ATP + H2O = L-glutaminyl-tRNA(Gln) + L-glutamate + ADP + phosphate + H(+). The enzyme catalyses L-aspartyl-tRNA(Asn) + L-glutamine + ATP + H2O = L-asparaginyl-tRNA(Asn) + L-glutamate + ADP + phosphate + 2 H(+). In terms of biological role, allows the formation of correctly charged Asn-tRNA(Asn) or Gln-tRNA(Gln) through the transamidation of misacylated Asp-tRNA(Asn) or Glu-tRNA(Gln) in organisms which lack either or both of asparaginyl-tRNA or glutaminyl-tRNA synthetases. The reaction takes place in the presence of glutamine and ATP through an activated phospho-Asp-tRNA(Asn) or phospho-Glu-tRNA(Gln). This chain is Aspartyl/glutamyl-tRNA(Asn/Gln) amidotransferase subunit C, found in Salinibacter ruber (strain DSM 13855 / M31).